The primary structure comprises 508 residues: RanBP-type and C3HC4-type zinc finger-containing protein 1 (508 aa).

Position 1 is an N-acetylmethionine (methionine 1). The tract at residues 1–218 (MDEKTKKAEE…PGCEMCCRAR (218 aa)) is interaction with IRF3. The interval 1 to 268 (MDEKTKKAEE…NYLQHVQLEQ (268 aa)) is interaction with TAB2. Serine 50 carries the phosphoserine modification. The region spanning 55–119 (IRLCVSVEDA…DQETLHSHGI (65 aa)) is the Ubiquitin-like domain. Positions 69 to 131 (VTIWLTVRPD…NGDSAYLYLL (63 aa)) are interaction with RNF31. Residues 161-191 (TLQPRGPLEPVLPKPRTHQETGQPDAAPESP) are disordered. Residues 188-220 (PESPPVGWQCPGCTFINKPTRPGCEMCCRARPE) form a RanBP2-type zinc finger. Positions 231–260 (DEEERARLAGEEEALRQYEQRKQQQQEGNY) form a coiled coil. Residues 276-504 (EPAECPVCYS…VNGIPCHPSC (229 aa)) are TRIAD supradomain. Zn(2+) is bound by residues cysteine 280, cysteine 283, cysteine 298, histidine 300, cysteine 303, cysteine 306, and cysteine 321. An RING-type 1 zinc finger spans residues 280–330 (CPVCYSVLAPGEAVVLRECLHTFCRECLQGTIRNSQEAEVSCPFIDNTYSC). Position 328 is a phosphotyrosine (tyrosine 328). Cysteine 330, cysteine 369, cysteine 374, cysteine 389, cysteine 392, cysteine 397, cysteine 400, histidine 404, cysteine 409, cysteine 445, and cysteine 448 together coordinate Zn(2+). The IBR-type zinc-finger motif lies at 349-409 (QRFLDLGVSI…CKAIHERMNC (61 aa)). An RING-type 2; atypical zinc finger spans residues 445 to 474 (CPQCRIVVQKKDGCDWIRCTVCHTEICWVT). Cysteine 458 is an active-site residue. Zn(2+)-binding residues include cysteine 463 and cysteine 466.

Belongs to the RBR family. As to quaternary structure, component of the LUBAC complex (linear ubiquitin chain assembly complex) which consists of SHARPIN, RBCK1 and RNF31. LUBAC has a MW of approximately 600 kDa suggesting a heteromultimeric assembly of its subunits. Interacts with beta-I-type (PRKCB1) and zeta-type protein kinase C (PRKCZ). Interacts with UBE2L3. Interacts with IREB2 only in iron-rich conditions. Associates with the TNF-R1 signaling complex (TNF-RSC) in a stimulation-dependent manner. Interacts with EYA1, TAB2, TAB3, MAP3K7 TRAF6 and RIPK1. Interacts with IRF3. Auto-ubiquitinated. Auto-ubiquitination leads to degradation by the proteasome. In terms of processing, phosphorylated. In vitro, phosphorylation inhibits auto-ubiquitination activity. As to expression, widely expressed.

It catalyses the reaction [E2 ubiquitin-conjugating enzyme]-S-ubiquitinyl-L-cysteine + [acceptor protein]-L-lysine = [E2 ubiquitin-conjugating enzyme]-L-cysteine + [acceptor protein]-N(6)-ubiquitinyl-L-lysine.. Its pathway is protein modification; protein ubiquitination. Functionally, E3 ubiquitin-protein ligase, which accepts ubiquitin from specific E2 ubiquitin-conjugating enzymes, such as UBE2L3/UBCM4, and then transfers it to substrates. Functions as an E3 ligase for oxidized IREB2 and both heme and oxygen are necessary for IREB2 ubiquitination. Promotes ubiquitination of TAB2 and IRF3 and their degradation by the proteasome. Component of the LUBAC complex which conjugates linear ('Met-1'-linked) polyubiquitin chains to substrates and plays a key role in NF-kappa-B activation and regulation of inflammation. LUBAC conjugates linear polyubiquitin to IKBKG and RIPK1 and is involved in activation of the canonical NF-kappa-B and the JNK signaling pathways. Linear ubiquitination mediated by the LUBAC complex interferes with TNF-induced cell death and thereby prevents inflammation. LUBAC is recruited to the TNF-R1 signaling complex (TNF-RSC) following polyubiquitination of TNF-RSC components by BIRC2 and/or BIRC3 and to conjugate linear polyubiquitin to IKBKG and possibly other components contributing to the stability of the complex. The LUBAC complex is also involved in innate immunity by conjugating linear polyubiquitin chains at the surface of bacteria invading the cytosol to form the ubiquitin coat surrounding bacteria. LUBAC is not able to initiate formation of the bacterial ubiquitin coat, and can only promote formation of linear polyubiquitins on pre-existing ubiquitin. The bacterial ubiquitin coat acts as an 'eat-me' signal for xenophagy and promotes NF-kappa-B activation. Together with OTULIN, the LUBAC complex regulates the canonical Wnt signaling during angiogenesis. Binds polyubiquitin of different linkage types. This chain is RanBP-type and C3HC4-type zinc finger-containing protein 1 (Rbck1), found in Rattus norvegicus (Rat).